We begin with the raw amino-acid sequence, 369 residues long: Peptidyl-prolyl cis-trans isomerase D (369 aa).

Residues 7 to 175 (YFDISCNGKP…EDWKIADCGE (169 aa)) form the PPIase cyclophilin-type domain. TPR repeat units follow at residues 217–250 (VSKI…LNDY), 268–301 (LSCY…EQID), and 306–339 (TKAL…EPND).

It belongs to the cyclophilin-type PPIase family. PPIase D subfamily.

The protein resides in the cytoplasm. The catalysed reaction is [protein]-peptidylproline (omega=180) = [protein]-peptidylproline (omega=0). Its function is as follows. PPIases accelerate the folding of proteins. It catalyzes the cis-trans isomerization of proline imidic peptide bonds in oligopeptides. This Candida albicans (strain SC5314 / ATCC MYA-2876) (Yeast) protein is Peptidyl-prolyl cis-trans isomerase D (CPR6).